A 106-amino-acid chain; its full sequence is Pyrimidine/purine nucleoside phosphorylase (106 aa).

Belongs to the nucleoside phosphorylase PpnP family.

The catalysed reaction is a purine D-ribonucleoside + phosphate = a purine nucleobase + alpha-D-ribose 1-phosphate. It catalyses the reaction adenosine + phosphate = alpha-D-ribose 1-phosphate + adenine. It carries out the reaction cytidine + phosphate = cytosine + alpha-D-ribose 1-phosphate. The enzyme catalyses guanosine + phosphate = alpha-D-ribose 1-phosphate + guanine. The catalysed reaction is inosine + phosphate = alpha-D-ribose 1-phosphate + hypoxanthine. It catalyses the reaction thymidine + phosphate = 2-deoxy-alpha-D-ribose 1-phosphate + thymine. It carries out the reaction uridine + phosphate = alpha-D-ribose 1-phosphate + uracil. The enzyme catalyses xanthosine + phosphate = alpha-D-ribose 1-phosphate + xanthine. In terms of biological role, catalyzes the phosphorolysis of diverse nucleosides, yielding D-ribose 1-phosphate and the respective free bases. Can use uridine, adenosine, guanosine, cytidine, thymidine, inosine and xanthosine as substrates. Also catalyzes the reverse reactions. The sequence is that of Pyrimidine/purine nucleoside phosphorylase from Burkholderia cenocepacia (strain ATCC BAA-245 / DSM 16553 / LMG 16656 / NCTC 13227 / J2315 / CF5610) (Burkholderia cepacia (strain J2315)).